A 95-amino-acid polypeptide reads, in one-letter code: Ragulator complex protein LAMTOR4 homolog (95 aa).

It belongs to the LAMTOR4 family. Part of the Ragulator complex.

The protein resides in the lysosome. Functionally, regulator of the TOR pathway, a signaling cascade that promotes cell growth in response to growth factors, energy levels, and amino acids. As part of the Ragulator complex, may activate the TOR signaling cascade in response to amino acids. This Nematostella vectensis (Starlet sea anemone) protein is Ragulator complex protein LAMTOR4 homolog.